A 1159-amino-acid chain; its full sequence is WASH complex subunit 5 (1159 aa).

Belongs to the strumpellin family. As to quaternary structure, component of the WASH core complex also described as WASH regulatory complex (SHRC) composed of WASH (WASHC1, WASH2P or WASH3P), WASHC2 (WASHC2A or WASHC2C), WASHC3, WASHC4 and WASHC5. The WASH core complex associates via WASHC2 with the F-actin-capping protein dimer (formed by CAPZA1, CAPZA2 or CAPZA3 and CAPZB) in a transient or substoichiometric manner which was initially described as WASH complex. Interacts with VCP, PI4K2A.

It localises to the cytoplasm. It is found in the cytosol. The protein resides in the endoplasmic reticulum. Its subcellular location is the early endosome. Functionally, acts as a component of the WASH core complex that functions as a nucleation-promoting factor (NPF) at the surface of endosomes, where it recruits and activates the Arp2/3 complex to induce actin polymerization, playing a key role in the fission of tubules that serve as transport intermediates during endosome sorting. May be involved in axonal outgrowth. Involved in cellular localization of ADRB2. Involved in cellular trafficking of BLOC-1 complex cargos such as ATP7A and VAMP7. Involved in cytokinesis and following polar body extrusion during oocyte meiotic maturation. This chain is WASH complex subunit 5, found in Mus musculus (Mouse).